Reading from the N-terminus, the 105-residue chain is MYRMPMRFWLTAVVMVVVGALLLDTASASYIENTCRGVMGNRDIYKKVVRVCEDCTNIFRLPGLDGMCRDRCFNNEWFLVCLKAANRDDELDKFKVWISILNPGL.

The N-terminal stretch at 1 to 28 (MYRMPMRFWLTAVVMVVVGALLLDTASA) is a signal peptide. Cystine bridges form between C35/C72, C52/C68, and C55/C81.

The protein belongs to the arthropod CHH/MIH/GIH/VIH hormone family. As to expression, expressed in the postmolt, intermolt, and premolt stages of the shrimp eyestalks and the brain.

It is found in the secreted. In terms of biological role, inhibits Y-organs where molting hormone (ecdysteroid) is secreted. A molting cycle is initiated when MIH secretion diminishes or stops. This is Probable molt-inhibiting hormone from Metapenaeus ensis (Greasyback shrimp).